We begin with the raw amino-acid sequence, 157 residues long: MEKVPMTTAGFESLKEELRWRQQQERPRIIEAISEARAHGDLSENAEYHAAKEAQSHNEGRINELEDYIARAEVIDVSRLSGDKIKFGATIKLLDEDTEEKKVYQIVGDQEADVKIGKISISSPIARALIGKQEGDVIEVNAPGGAHNYEIIKVQYI.

This sequence belongs to the GreA/GreB family.

Necessary for efficient RNA polymerase transcription elongation past template-encoded arresting sites. The arresting sites in DNA have the property of trapping a certain fraction of elongating RNA polymerases that pass through, resulting in locked ternary complexes. Cleavage of the nascent transcript by cleavage factors such as GreA or GreB allows the resumption of elongation from the new 3'terminus. GreA releases sequences of 2 to 3 nucleotides. The protein is Transcription elongation factor GreA of Bartonella tribocorum (strain CIP 105476 / IBS 506).